A 1042-amino-acid polypeptide reads, in one-letter code: Isoleucine--tRNA ligase (1042 aa).

The 'HIGH' region signature appears at 48 to 58 (PFATGLPHFGH). The 'KMSKS' region motif lies at 594 to 598 (KMSKS). ATP is bound at residue Lys-597.

The protein belongs to the class-I aminoacyl-tRNA synthetase family. IleS type 2 subfamily. In terms of assembly, monomer. The cofactor is Zn(2+).

It is found in the cytoplasm. It catalyses the reaction tRNA(Ile) + L-isoleucine + ATP = L-isoleucyl-tRNA(Ile) + AMP + diphosphate. Its function is as follows. Catalyzes the attachment of isoleucine to tRNA(Ile). As IleRS can inadvertently accommodate and process structurally similar amino acids such as valine, to avoid such errors it has two additional distinct tRNA(Ile)-dependent editing activities. One activity is designated as 'pretransfer' editing and involves the hydrolysis of activated Val-AMP. The other activity is designated 'posttransfer' editing and involves deacylation of mischarged Val-tRNA(Ile). This Borreliella burgdorferi (strain ZS7) (Borrelia burgdorferi) protein is Isoleucine--tRNA ligase.